The following is a 60-amino-acid chain: Homeobox protein CHOX-CAD2 (60 aa).

Residues 1–60 (KEKYRVVYTDHQRLELEKEFHCNRYITIRRKSELAVNLGLSERQVKSWFQNRRAKERKII) constitute a DNA-binding region (homeobox).

This sequence belongs to the Caudal homeobox family.

It localises to the nucleus. The chain is Homeobox protein CHOX-CAD2 (CHOX-CAD2) from Gallus gallus (Chicken).